A 574-amino-acid polypeptide reads, in one-letter code: Pentatricopeptide repeat-containing protein At5g25630 (574 aa).

The span at 1 to 21 (MEDVNQEKKKVPPMSEPERST) shows a compositional bias: basic and acidic residues. Positions 1-25 (MEDVNQEKKKVPPMSEPERSTPIKT) are disordered. 12 PPR repeats span residues 44–78 (TVRSRTKLMNVLIERGRPHEAQTVFKTLAETGHRP), 79–113 (SLISYTTLLAAMTVQKQYGSISSIVSEVEQSGTKL), 114–148 (DSIFFNAVINAFSESGNMEDAVQALLKMKELGLNP), 149–183 (TTSTYNTLIKGYGIAGKPERSSELLDLMLEEGNVD), 187–221 (NIRTFNVLVQAWCKKKKVEEAWEVVKKMEECGVRP), 222–258 (DTVTYNTIATCYVQKGETVRAESEVVEKMVMKEKAKP), 259–293 (NGRTCGIVVGGYCREGRVRDGLRFVRRMKEMRVEA), 294–328 (NLVVFNSLINGFVEVMDRDGIDEVLTLMKECNVKA), 329–363 (DVITYSTVMNAWSSAGYMEKAAQVFKEMVKAGVKP), 364–394 (DAHAYSILAKGYVRAKEPKKAEELLETLIVE), 398–432 (NVVIFTTVISGWCSNGSMDDAMRVFNKMCKFGVSP), and 433–467 (NIKTFETLMWGYLEVKQPWKAEEVLQMMRGCGVKP).

This sequence belongs to the PPR family. P subfamily.

This Arabidopsis thaliana (Mouse-ear cress) protein is Pentatricopeptide repeat-containing protein At5g25630.